The chain runs to 269 residues: Zinc finger protein SNAI2 (269 aa).

The segment at 1-20 is SNAG domain; sequence MPRSFLVKKHFNASKKPNYS. Residues 81 to 117 form a disordered region; it reads SSSLGRVSPPPSSDTSSKDHSGSESPISDEEERLQPK. 4 consecutive C2H2-type zinc fingers follow at residues 129–151, 160–182, 186–208, and 214–236; these read FQCN…KQLH, FSCK…IRTH, CVCK…IRTH, and FSCP…LQTH. The C2H2-type 5; atypical zinc finger occupies 242–265; that stretch reads YQCKNCSKTFSRMSLLHKHEESGC.

Belongs to the snail C2H2-type zinc-finger protein family. In terms of assembly, interacts (via SNAG domain) with LIMD1 (via LIM domains), WTIP (via LIM domains) and AJUBA (via LIM domains). Interacts (via zinc fingers) with KPNA2, KPNB1, and TNPO1. May interact (via zinc fingers) with IPO7. Post-translationally, phosphorylated by GSK3B. Once phosphorylated, it becomes a target for ubiquitination. Ubiquitinated by the SCF(FBXO11) complex; ubiquitination requires previous GSK3B-mediated SNAI2 phosphorylation.

It is found in the nucleus. Its subcellular location is the cytoplasm. Transcriptional repressor that modulates both activator-dependent and basal transcription. Involved in the generation and migration of neural crest cells. Plays a role in mediating RAF1-induced transcriptional repression of the TJ protein, occludin (OCLN) and subsequent oncogenic transformation of epithelial cells. Represses BRCA2 expression by binding to its E2-box-containing silencer and recruiting CTBP1 and HDAC1 in breast cells. In epidermal keratinocytes, binds to the E-box in ITGA3 promoter and represses its transcription. Involved in the regulation of ITGB1 and ITGB4 expression and cell adhesion and proliferation in epidermal keratinocytes. Binds to E-box2 domain of BSG and activates its expression during TGFB1-induced epithelial-mesenchymal transition (EMT) in hepatocytes. Represses E-Cadherin/CDH1 transcription via E-box elements. Involved in osteoblast maturation. Binds to RUNX2 and SOC9 promoters and may act as a positive and negative transcription regulator, respectively, in osteoblasts. Binds to CXCL12 promoter via E-box regions in mesenchymal stem cells and osteoblasts. Plays an essential role in TWIST1-induced EMT and its ability to promote invasion and metastasis. The protein is Zinc finger protein SNAI2 (Snai2) of Mus musculus (Mouse).